Reading from the N-terminus, the 1465-residue chain is DNA polymerase alpha catalytic subunit (1465 aa).

Disordered stretches follow at residues Gly-20 to Glu-39 and Leu-105 to Thr-135. Over residues Arg-26–Lys-35 the composition is skewed to basic residues. Position 180 is a phosphothreonine (Thr-180). Phosphoserine is present on residues Ser-192 and Ser-215. Residue Lys-230 is modified to N6-acetyllysine. The interval Asp-261–Arg-297 is disordered. Basic and acidic residues-rich tracts occupy residues Asp-265–Val-274 and Pro-285–Arg-297. Residues Arg-654–Ile-719 form a DNA-binding region. Lys-974 is modified (N6-succinyllysine). The DNA-binding stretch occupies residues Gln-1249 to Lys-1380. Residues Cys-1287, Cys-1290, Cys-1314, Cys-1319, Cys-1352, Cys-1357, Cys-1375, and Cys-1378 each contribute to the Zn(2+) site. The CysA-type zinc-finger motif lies at Cys-1287 to Val-1317. A CysB motif motif is present at residues Cys-1352–Cys-1378.

It belongs to the DNA polymerase type-B family. As to quaternary structure, component of the alpha DNA polymerase complex (also known as the alpha DNA polymerase-primase complex) consisting of four subunits: the catalytic subunit POLA1, the regulatory subunit POLA2, and the primase complex subunits PRIM1 and PRIM2 respectively. Within the complex, POLA1 directly interacts with PRIM2. Interacts with PARP1; this interaction functions as part of the control of replication fork progression. Interacts with MCM10 and WDHD1; these interactions recruit the polymerase alpha complex to the pre-replicative complex bound to DNA. Interacts with RPA1; this interaction stabilizes the replicative complex and reduces the misincorporation rate of DNA polymerase alpha by acting as a fidelity clamp. As to expression, expressed in those zones containing proliferating cells in the developing embryonic neocortex, as well as in the lateral and medial ganglionic eminences. After birth, expressed in cells that remain proliferating in the ventricular and subventricular zone of the striatum.

It localises to the nucleus. The protein resides in the cytoplasm. It is found in the cytosol. The enzyme catalyses DNA(n) + a 2'-deoxyribonucleoside 5'-triphosphate = DNA(n+1) + diphosphate. Catalytic subunit of the DNA polymerase alpha complex (also known as the alpha DNA polymerase-primase complex) which plays an essential role in the initiation of DNA synthesis. During the S phase of the cell cycle, the DNA polymerase alpha complex (composed of a catalytic subunit POLA1, a regulatory subunit POLA2 and two primase subunits PRIM1 and PRIM2) is recruited to DNA at the replicative forks via direct interactions with MCM10 and WDHD1. The primase subunit of the polymerase alpha complex initiates DNA synthesis by oligomerising short RNA primers on both leading and lagging strands. These primers are initially extended by the polymerase alpha catalytic subunit and subsequently transferred to polymerase delta and polymerase epsilon for processive synthesis on the lagging and leading strand, respectively. The reason this transfer occurs is because the polymerase alpha has limited processivity and lacks intrinsic 3' exonuclease activity for proofreading error, and therefore is not well suited for replicating long complexes. In the cytosol, responsible for a substantial proportion of the physiological concentration of cytosolic RNA:DNA hybrids, which are necessary to prevent spontaneous activation of type I interferon responses. The polypeptide is DNA polymerase alpha catalytic subunit (Pola1) (Mus musculus (Mouse)).